We begin with the raw amino-acid sequence, 226 residues long: Endonuclease V (226 aa).

2 residues coordinate Mg(2+): D42 and D110.

Belongs to the endonuclease V family. The cofactor is Mg(2+).

It localises to the cytoplasm. It catalyses the reaction Endonucleolytic cleavage at apurinic or apyrimidinic sites to products with a 5'-phosphate.. Its function is as follows. DNA repair enzyme involved in the repair of deaminated bases. Selectively cleaves double-stranded DNA at the second phosphodiester bond 3' to a deoxyinosine leaving behind the intact lesion on the nicked DNA. This Thermus thermophilus (strain ATCC BAA-163 / DSM 7039 / HB27) protein is Endonuclease V.